We begin with the raw amino-acid sequence, 282 residues long: MALFGAHVSSAGSILKTFKRAKDIGAEVFQFFLRSPRAWYWKGVDKETKQAFIEKLKDFKNPVMVHAPYLLNLASPNEELREKSVKVFLEELKFCDEVGIHFYNFHPGTAKGISDEEGLRNVIKSLEEVFSEYTPKFTTVLLENTAGERGDLGKNFKELKEIMNVFRGIKLGVCLDTCHAFAYGYEINTKEGFENFKREIEKMVGLESVKAVHANDSKVPLGGRKDRHEHIGKGYIGLEGFKNLLKDEYFSTLPYYIETPKENNMDPVNLSVLREIYQNNDL.

His-66, His-106, Glu-143, Asp-176, His-179, His-213, Asp-226, His-228, and Glu-258 together coordinate Zn(2+).

It belongs to the AP endonuclease 2 family. Requires Zn(2+) as cofactor.

The enzyme catalyses Endonucleolytic cleavage to 5'-phosphooligonucleotide end-products.. Endonuclease IV plays a role in DNA repair. It cleaves phosphodiester bonds at apurinic or apyrimidinic (AP) sites, generating a 3'-hydroxyl group and a 5'-terminal sugar phosphate. The polypeptide is Probable endonuclease 4 (Aquifex aeolicus (strain VF5)).